The chain runs to 751 residues: Proton-associated sugar transporter A (751 aa).

The next 6 helical transmembrane spans lie at 93-113 (ILFG…PVLL), 123-143 (SLVW…LGAW), 155-175 (RPFI…LLNG), 191-211 (WGIL…DSAD), 233-253 (IHAL…GIHW), and 268-288 (VIYI…LVSI). Position 500 is a phosphothreonine (Thr-500). Transmembrane regions (helical) follow at residues 536 to 556 (GWLS…EVVF), 576 to 596 (VTMG…YSAI), 606 to 626 (VRTL…LATL), 630 to 650 (LYVV…LCTL), 688 to 708 (FLAQ…VGSA), and 710 to 730 (GVMY…SLCV).

It belongs to the glycoside-pentoside-hexuronide (GPH) cation symporter transporter (TC 2.A.2) family. Predominantly expressed in brain.

It is found in the membrane. It catalyses the reaction D-galactose(in) + H(+)(in) = D-galactose(out) + H(+)(out). It carries out the reaction D-glucose(out) + H(+)(out) = D-glucose(in) + H(+)(in). In terms of biological role, proton-associated glucose transporter in the brain. In Rattus norvegicus (Rat), this protein is Proton-associated sugar transporter A.